The primary structure comprises 571 residues: Vesicle-associated protein 1-4 (571 aa).

The 126-residue stretch at methionine 1–valine 126 folds into the MSP 1 domain. The disordered stretch occupies residues glutamine 132 to asparagine 154. Residues serine 143–glycine 153 show a composition bias toward polar residues. One can recognise an MSP 2 domain in the interval leucine 176–valine 296. Positions threonine 297–asparagine 322 are disordered. Residues glutamate 311 to asparagine 322 are compositionally biased toward polar residues. Residues proline 356–phenylalanine 493 enclose the TIR domain. Glutamate 430 is a catalytic residue.

This sequence belongs to the VAMP-associated protein (VAP) (TC 9.B.17) family.

The enzyme catalyses NAD(+) + H2O = ADP-D-ribose + nicotinamide + H(+). Its function is as follows. May play a role in vesicle trafficking. This Arabidopsis thaliana (Mouse-ear cress) protein is Vesicle-associated protein 1-4 (PVA14).